A 168-amino-acid polypeptide reads, in one-letter code: SPbeta prophage-derived uncharacterized protein YomW (168 aa).

The polypeptide is SPbeta prophage-derived uncharacterized protein YomW (yomW) (Bacillus subtilis (strain 168)).